The following is a 140-amino-acid chain: Large ribosomal subunit protein uL11 (140 aa).

This sequence belongs to the universal ribosomal protein uL11 family. In terms of assembly, part of the ribosomal stalk of the 50S ribosomal subunit. Interacts with L10 and the large rRNA to form the base of the stalk. L10 forms an elongated spine to which L12 dimers bind in a sequential fashion forming a multimeric L10(L12)X complex. Post-translationally, one or more lysine residues are methylated.

In terms of biological role, forms part of the ribosomal stalk which helps the ribosome interact with GTP-bound translation factors. The protein is Large ribosomal subunit protein uL11 of Desulfovibrio desulfuricans (strain ATCC 27774 / DSM 6949 / MB).